A 215-amino-acid chain; its full sequence is Adenylate kinase (215 aa).

10–15 (GAGKGT) serves as a coordination point for ATP. Residues 30-59 (STGDMFRAAMKNNTELGRKAKSFMDNGDLV) form an NMP region. Residues Thr-31, Arg-36, 57-59 (DLV), 85-88 (GFPR), and Gln-92 contribute to the AMP site. Positions 126–163 (GRWICRTCGKTYHEIYNPPKVAGKCDLDGGELYQRDDD) are LID. Arg-127 lines the ATP pocket. Positions 130 and 133 each coordinate Zn(2+). ATP is bound at residue 136–137 (TY). Zn(2+)-binding residues include Cys-150 and Asp-153. Residues Arg-160 and Arg-171 each contribute to the AMP site. Gln-199 provides a ligand contact to ATP.

Belongs to the adenylate kinase family. Monomer.

Its subcellular location is the cytoplasm. It catalyses the reaction AMP + ATP = 2 ADP. The protein operates within purine metabolism; AMP biosynthesis via salvage pathway; AMP from ADP: step 1/1. Catalyzes the reversible transfer of the terminal phosphate group between ATP and AMP. Plays an important role in cellular energy homeostasis and in adenine nucleotide metabolism. This is Adenylate kinase from Listeria monocytogenes serotype 4a (strain HCC23).